Reading from the N-terminus, the 352-residue chain is Holliday junction branch migration complex subunit RuvB (352 aa).

A large ATPase domain (RuvB-L) region spans residues 13 to 201 (FSLRKKELRL…FGISQKIEFY (189 aa)). ATP is bound by residues Arg-41, Gly-82, Lys-85, Thr-86, Thr-87, 148 to 150 (EDF), Arg-191, Tyr-201, and Arg-238. Mg(2+) is bound at residue Thr-86. Residues 202–273 (TYDELKQIIV…LIKKALNSYQ (72 aa)) are small ATPAse domain (RuvB-S). The head domain (RuvB-H) stretch occupies residues 276–352 (EKGLDSLDRN…KYIDSKNENF (77 aa)). 2 residues coordinate DNA: Arg-330 and Arg-335.

It belongs to the RuvB family. Homohexamer. Forms an RuvA(8)-RuvB(12)-Holliday junction (HJ) complex. HJ DNA is sandwiched between 2 RuvA tetramers; dsDNA enters through RuvA and exits via RuvB. An RuvB hexamer assembles on each DNA strand where it exits the tetramer. Each RuvB hexamer is contacted by two RuvA subunits (via domain III) on 2 adjacent RuvB subunits; this complex drives branch migration. In the full resolvosome a probable DNA-RuvA(4)-RuvB(12)-RuvC(2) complex forms which resolves the HJ.

The protein resides in the cytoplasm. The catalysed reaction is ATP + H2O = ADP + phosphate + H(+). Its function is as follows. The RuvA-RuvB-RuvC complex processes Holliday junction (HJ) DNA during genetic recombination and DNA repair, while the RuvA-RuvB complex plays an important role in the rescue of blocked DNA replication forks via replication fork reversal (RFR). RuvA specifically binds to HJ cruciform DNA, conferring on it an open structure. The RuvB hexamer acts as an ATP-dependent pump, pulling dsDNA into and through the RuvAB complex. RuvB forms 2 homohexamers on either side of HJ DNA bound by 1 or 2 RuvA tetramers; 4 subunits per hexamer contact DNA at a time. Coordinated motions by a converter formed by DNA-disengaged RuvB subunits stimulates ATP hydrolysis and nucleotide exchange. Immobilization of the converter enables RuvB to convert the ATP-contained energy into a lever motion, pulling 2 nucleotides of DNA out of the RuvA tetramer per ATP hydrolyzed, thus driving DNA branch migration. The RuvB motors rotate together with the DNA substrate, which together with the progressing nucleotide cycle form the mechanistic basis for DNA recombination by continuous HJ branch migration. Branch migration allows RuvC to scan DNA until it finds its consensus sequence, where it cleaves and resolves cruciform DNA. This Prochlorococcus marinus (strain MIT 9215) protein is Holliday junction branch migration complex subunit RuvB.